We begin with the raw amino-acid sequence, 140 residues long: MAMTVHCDVVSAEEKIYSGLVEMLIATGTEGELGIQYGHAPLLSELKPGAVRIIKQGGSEEILYVSGGYLEVQPNLVTLMADTAVRAKDVDEAAALEAQKQAEKALANKTGEFEYSRAAAELAEAAAQLRTIQKLRKHLR.

It belongs to the ATPase epsilon chain family. As to quaternary structure, F-type ATPases have 2 components, CF(1) - the catalytic core - and CF(0) - the membrane proton channel. CF(1) has five subunits: alpha(3), beta(3), gamma(1), delta(1), epsilon(1). CF(0) has three main subunits: a, b and c.

Its subcellular location is the cell inner membrane. In terms of biological role, produces ATP from ADP in the presence of a proton gradient across the membrane. The polypeptide is ATP synthase epsilon chain (Marinobacter nauticus (strain ATCC 700491 / DSM 11845 / VT8) (Marinobacter aquaeolei)).